Consider the following 277-residue polypeptide: F420-dependent methylenetetrahydromethanopterin dehydrogenase (277 aa).

Belongs to the MTD family.

The enzyme catalyses 5,10-methylenetetrahydromethanopterin + oxidized coenzyme F420-(gamma-L-Glu)(n) + 2 H(+) = 5,10-methenyl-5,6,7,8-tetrahydromethanopterin + reduced coenzyme F420-(gamma-L-Glu)(n). Its pathway is one-carbon metabolism; methanogenesis from CO(2); 5,10-methylene-5,6,7,8-tetrahydromethanopterin from 5,10-methenyl-5,6,7,8-tetrahydromethanopterin (coenzyme F420 route): step 1/1. In terms of biological role, catalyzes the reversible reduction of methenyl-H(4)MPT(+) to methylene-H(4)MPT. This is F420-dependent methylenetetrahydromethanopterin dehydrogenase from Methanococcus maripaludis (strain C5 / ATCC BAA-1333).